The sequence spans 156 residues: SCP2 sterol-binding domain-containing protein 1 (156 aa).

The SCP2 domain occupies 44-156 (SFPVFQDIRL…ERVFKDWAKF (113 aa)).

The sequence is that of SCP2 sterol-binding domain-containing protein 1 (SCP2D1) from Homo sapiens (Human).